Reading from the N-terminus, the 119-residue chain is Large ribosomal subunit protein uL18 (119 aa).

The protein belongs to the universal ribosomal protein uL18 family. In terms of assembly, part of the 50S ribosomal subunit; part of the 5S rRNA/L5/L18/L25 subcomplex. Contacts the 5S and 23S rRNAs.

In terms of biological role, this is one of the proteins that bind and probably mediate the attachment of the 5S RNA into the large ribosomal subunit, where it forms part of the central protuberance. The sequence is that of Large ribosomal subunit protein uL18 from Lactobacillus delbrueckii subsp. bulgaricus (strain ATCC 11842 / DSM 20081 / BCRC 10696 / JCM 1002 / NBRC 13953 / NCIMB 11778 / NCTC 12712 / WDCM 00102 / Lb 14).